Here is an 80-residue protein sequence, read N- to C-terminus: MVKLRLKRCGKKQRAVYRIVAIDVRSRREGRDLRKVGFYDPIKNQTYLNIPVILNFLEQGAQPTGTVQDISKKAGFFMDL.

The protein belongs to the bacterial ribosomal protein bS16 family.

The protein localises to the plastid. Its subcellular location is the chloroplast. This chain is Small ribosomal subunit protein bS16c, found in Lotus japonicus (Lotus corniculatus var. japonicus).